The sequence spans 257 residues: Ribonuclease HII (257 aa).

The RNase H type-2 domain maps to 72–257 (TYIAGIDEVG…FAPIKDMIKK (186 aa)). The a divalent metal cation site is built by Asp-78, Glu-79, and Asp-170.

Belongs to the RNase HII family. Mn(2+) is required as a cofactor. It depends on Mg(2+) as a cofactor.

It is found in the cytoplasm. The enzyme catalyses Endonucleolytic cleavage to 5'-phosphomonoester.. In terms of biological role, endonuclease that specifically degrades the RNA of RNA-DNA hybrids. The chain is Ribonuclease HII from Bacillus anthracis (strain A0248).